A 120-amino-acid chain; its full sequence is Large ribosomal subunit protein uL18 (120 aa).

The disordered stretch occupies residues Met-1 to Gly-22. Residues Ala-8–Ile-20 are compositionally biased toward basic residues.

Belongs to the universal ribosomal protein uL18 family. In terms of assembly, part of the 50S ribosomal subunit; part of the 5S rRNA/L5/L18/L25 subcomplex. Contacts the 5S and 23S rRNAs.

Its function is as follows. This is one of the proteins that bind and probably mediate the attachment of the 5S RNA into the large ribosomal subunit, where it forms part of the central protuberance. This is Large ribosomal subunit protein uL18 from Gloeobacter violaceus (strain ATCC 29082 / PCC 7421).